Here is a 158-residue protein sequence, read N- to C-terminus: MQGNLSAWLVKHGIVHRSLGFDYQGIETLQIKPEDWHSIAVILYVYGYNYLRSQCAYDVAPGGLLASVYHLTRIEYSLDQPEEVCIKVFAPRKNPRIPSIFWVWKSADFQERESYDMLGISYDNHPRLKRILMPESWIGWPLRKDYIAPNFYEIQDAH.

This sequence belongs to the complex I 30 kDa subunit family. As to quaternary structure, NDH is composed of at least 16 different subunits, 5 of which are encoded in the nucleus.

It is found in the plastid. Its subcellular location is the chloroplast thylakoid membrane. The enzyme catalyses a plastoquinone + NADH + (n+1) H(+)(in) = a plastoquinol + NAD(+) + n H(+)(out). The catalysed reaction is a plastoquinone + NADPH + (n+1) H(+)(in) = a plastoquinol + NADP(+) + n H(+)(out). Its function is as follows. NDH shuttles electrons from NAD(P)H:plastoquinone, via FMN and iron-sulfur (Fe-S) centers, to quinones in the photosynthetic chain and possibly in a chloroplast respiratory chain. The immediate electron acceptor for the enzyme in this species is believed to be plastoquinone. Couples the redox reaction to proton translocation, and thus conserves the redox energy in a proton gradient. The chain is NAD(P)H-quinone oxidoreductase subunit J, chloroplastic from Cicer arietinum (Chickpea).